A 49-amino-acid chain; its full sequence is Small ribosomal subunit protein uS14B (49 aa).

It belongs to the universal ribosomal protein uS14 family. Zinc-binding uS14 subfamily. Part of the 30S ribosomal subunit.

Binds 16S rRNA, required for the assembly of 30S particles. The sequence is that of Small ribosomal subunit protein uS14B from Natronomonas pharaonis (strain ATCC 35678 / DSM 2160 / CIP 103997 / JCM 8858 / NBRC 14720 / NCIMB 2260 / Gabara) (Halobacterium pharaonis).